We begin with the raw amino-acid sequence, 449 residues long: MRQRITELLVAKAEEQVVTVAGWIRTRRDTGDFSFLEVNDGSTLINMQVIADKSLGNYEEEVKKLSTGCSVMVEGVLKESPAKGQSVEVHASSVTVVGWADPETYPLQKKRHSLEFLREISHLRPRTNAISAVARVRSRLSYAVHNFFQEKGFTQVHTPIITTSDCEGAGEMFQVAATGKDGHFFGAPAGLTVSGQLQAEVYATALGDVYTFGPTFRAENSNTSRHLAEFWMIEPEMAFCDLQGDMEVAEEMLKYVLADVLEHCVTDMNLFDKFISKGIIERLQSVLAHDFARVTYTEAVDQLLASGQKFDFAVKWGIDLQSEHERYLTEQVYKRPLIVTDYPAAIKPFYMRMNEDGKTVAAMDILVPGIGELVGGSQREERYDLLAERMEAAGLDLEEYGWYLDLRKYGTVPHAGFGLGFERLVQFVTGMANIREVIPFPRTPGFAPC.

Belongs to the class-II aminoacyl-tRNA synthetase family. In terms of assembly, homodimer.

The protein resides in the cytoplasm. It catalyses the reaction tRNA(Asn) + L-asparagine + ATP = L-asparaginyl-tRNA(Asn) + AMP + diphosphate + H(+). The protein is Asparagine--tRNA ligase of Desulfotalea psychrophila (strain LSv54 / DSM 12343).